Reading from the N-terminus, the 465-residue chain is Argininosuccinate lyase (465 aa).

The protein belongs to the lyase 1 family. Argininosuccinate lyase subfamily.

It localises to the cytoplasm. It carries out the reaction 2-(N(omega)-L-arginino)succinate = fumarate + L-arginine. It functions in the pathway amino-acid biosynthesis; L-arginine biosynthesis; L-arginine from L-ornithine and carbamoyl phosphate: step 3/3. The sequence is that of Argininosuccinate lyase from Bradyrhizobium diazoefficiens (strain JCM 10833 / BCRC 13528 / IAM 13628 / NBRC 14792 / USDA 110).